We begin with the raw amino-acid sequence, 631 residues long: Alpha-dioxygenase 2 (631 aa).

An N-terminal signal peptide occupies residues 1–20 (MGFSPSSSWFLHPQLHHVVS). H157 serves as a coordination point for heme b. The active-site Proton acceptor is Y378. H381 provides a ligand contact to heme b. An N-linked (GlcNAc...) asparagine glycan is attached at N583.

The protein belongs to the peroxidase family. Requires heme b as cofactor. In terms of tissue distribution, expressed in seedlings (cotyledons, young leaves, and hypocotyls), flowers, siliques and old leaves.

In terms of biological role, alpha-dioxygenase that catalyzes the primary oxygenation of fatty acids into oxylipins. May be involved in the senescence process. In Arabidopsis thaliana (Mouse-ear cress), this protein is Alpha-dioxygenase 2 (DOX2).